The sequence spans 236 residues: 7-cyano-7-deazaguanine synthase 2 (236 aa).

11-21 lines the ATP pocket; that stretch reads FSGGQDSATCL. Zn(2+) contacts are provided by cysteine 199, cysteine 214, cysteine 217, and cysteine 220.

This sequence belongs to the QueC family. The cofactor is Zn(2+).

It carries out the reaction 7-carboxy-7-deazaguanine + NH4(+) + ATP = 7-cyano-7-deazaguanine + ADP + phosphate + H2O + H(+). It functions in the pathway purine metabolism; 7-cyano-7-deazaguanine biosynthesis. Functionally, catalyzes the ATP-dependent conversion of 7-carboxy-7-deazaguanine (CDG) to 7-cyano-7-deazaguanine (preQ(0)). The protein is 7-cyano-7-deazaguanine synthase 2 of Sphingopyxis alaskensis (strain DSM 13593 / LMG 18877 / RB2256) (Sphingomonas alaskensis).